Consider the following 382-residue polypeptide: Dual-specificity RNA methyltransferase RlmN (382 aa).

The active-site Proton acceptor is Glu-95. Residues 101–349 (EETRGTLCVS…TTVRKTRGDD (249 aa)) enclose the Radical SAM core domain. Cysteines 108 and 354 form a disulfide. Positions 115, 119, and 122 each coordinate [4Fe-4S] cluster. S-adenosyl-L-methionine-binding positions include 180–181 (GE), Ser-212, 234–236 (SLH), and Asn-311. Cys-354 acts as the S-methylcysteine intermediate in catalysis.

The protein belongs to the radical SAM superfamily. RlmN family. [4Fe-4S] cluster serves as cofactor.

It localises to the cytoplasm. The catalysed reaction is adenosine(2503) in 23S rRNA + 2 reduced [2Fe-2S]-[ferredoxin] + 2 S-adenosyl-L-methionine = 2-methyladenosine(2503) in 23S rRNA + 5'-deoxyadenosine + L-methionine + 2 oxidized [2Fe-2S]-[ferredoxin] + S-adenosyl-L-homocysteine. It catalyses the reaction adenosine(37) in tRNA + 2 reduced [2Fe-2S]-[ferredoxin] + 2 S-adenosyl-L-methionine = 2-methyladenosine(37) in tRNA + 5'-deoxyadenosine + L-methionine + 2 oxidized [2Fe-2S]-[ferredoxin] + S-adenosyl-L-homocysteine. Functionally, specifically methylates position 2 of adenine 2503 in 23S rRNA and position 2 of adenine 37 in tRNAs. m2A2503 modification seems to play a crucial role in the proofreading step occurring at the peptidyl transferase center and thus would serve to optimize ribosomal fidelity. The polypeptide is Dual-specificity RNA methyltransferase RlmN (Paraburkholderia phymatum (strain DSM 17167 / CIP 108236 / LMG 21445 / STM815) (Burkholderia phymatum)).